A 409-amino-acid chain; its full sequence is 1-deoxy-D-xylulose 5-phosphate reductoisomerase (409 aa).

Positions 10, 11, 12, 13, 36, 37, 38, and 126 each coordinate NADPH. Lys-127 provides a ligand contact to 1-deoxy-D-xylulose 5-phosphate. Glu-128 serves as a coordination point for NADPH. Asp-152 provides a ligand contact to Mn(2+). 1-deoxy-D-xylulose 5-phosphate contacts are provided by Ser-153, Glu-154, Ser-190, and His-213. Mn(2+) is bound at residue Glu-154. Residue Gly-219 coordinates NADPH. Ser-226, Asn-231, Lys-232, and Glu-235 together coordinate 1-deoxy-D-xylulose 5-phosphate. Glu-235 provides a ligand contact to Mn(2+).

The protein belongs to the DXR family. Mg(2+) serves as cofactor. It depends on Mn(2+) as a cofactor.

It carries out the reaction 2-C-methyl-D-erythritol 4-phosphate + NADP(+) = 1-deoxy-D-xylulose 5-phosphate + NADPH + H(+). It participates in isoprenoid biosynthesis; isopentenyl diphosphate biosynthesis via DXP pathway; isopentenyl diphosphate from 1-deoxy-D-xylulose 5-phosphate: step 1/6. In terms of biological role, catalyzes the NADPH-dependent rearrangement and reduction of 1-deoxy-D-xylulose-5-phosphate (DXP) to 2-C-methyl-D-erythritol 4-phosphate (MEP). The protein is 1-deoxy-D-xylulose 5-phosphate reductoisomerase of Prochlorococcus marinus (strain MIT 9515).